We begin with the raw amino-acid sequence, 222 residues long: 7-cyano-7-deazaguanine synthase (222 aa).

9–19 (LSGGLDSATAA) contributes to the ATP binding site. Residues C190, C198, C201, and C204 each contribute to the Zn(2+) site.

It belongs to the QueC family. Zn(2+) serves as cofactor.

The enzyme catalyses 7-carboxy-7-deazaguanine + NH4(+) + ATP = 7-cyano-7-deazaguanine + ADP + phosphate + H2O + H(+). It functions in the pathway purine metabolism; 7-cyano-7-deazaguanine biosynthesis. In terms of biological role, catalyzes the ATP-dependent conversion of 7-carboxy-7-deazaguanine (CDG) to 7-cyano-7-deazaguanine (preQ(0)). The polypeptide is 7-cyano-7-deazaguanine synthase (Synechococcus sp. (strain RCC307)).